Consider the following 124-residue polypeptide: Putative iron-sulfur cluster insertion protein ErpA (124 aa).

Residues cysteine 52, cysteine 116, and cysteine 118 each coordinate iron-sulfur cluster.

Belongs to the HesB/IscA family. Homodimer. The cofactor is iron-sulfur cluster.

Functionally, required for insertion of 4Fe-4S clusters. This Delftia acidovorans (strain DSM 14801 / SPH-1) protein is Putative iron-sulfur cluster insertion protein ErpA.